The following is a 161-amino-acid chain: C-type lectin lectoxin-Lio3 (161 aa).

The first 23 residues, 1–23 (MRRFIFMSLGLLVLAFSLSGIGA), serve as a signal peptide directing secretion. 3 disulfides stabilise this stretch: cysteine 27-cysteine 38, cysteine 55-cysteine 154, and cysteine 129-cysteine 146. The region spanning 34–155 (HNISCYKLFT…CGLLHYFICQ (122 aa)) is the C-type lectin domain. Residue asparagine 35 is glycosylated (N-linked (GlcNAc...) asparagine). Residues 117–119 (KGE) carry the Mannose-binding motif. Residues glutamate 127, asparagine 142, and aspartate 143 each contribute to the Ca(2+) site.

This sequence belongs to the true venom lectin family. In terms of tissue distribution, expressed by the venom gland.

Its subcellular location is the secreted. Mannose-binding lectin which recognizes specific carbohydrate structures and agglutinates a variety of animal cells by binding to cell-surface glycoproteins and glycolipids. May be a calcium-dependent lectin. This Erythrolamprus poecilogyrus (Water snake) protein is C-type lectin lectoxin-Lio3.